Here is a 189-residue protein sequence, read N- to C-terminus: Transcription factor E (189 aa).

One can recognise an HTH TFE/IIEalpha-type domain in the interval 9–101; sequence AVKSLEIYVR…FWRIDSDTIN (93 aa).

Belongs to the TFE family. As to quaternary structure, monomer. Interaction with RNA polymerase subunits RpoF and RpoE is necessary for Tfe stimulatory transcription activity. Able to interact with Tbp and RNA polymerase in the absence of DNA promoter. Interacts both with the preinitiation and elongation complexes.

Transcription factor that plays a role in the activation of archaeal genes transcribed by RNA polymerase. Facilitates transcription initiation by enhancing TATA-box recognition by TATA-box-binding protein (Tbp), and transcription factor B (Tfb) and RNA polymerase recruitment. Not absolutely required for transcription in vitro, but particularly important in cases where Tbp or Tfb function is not optimal. It dynamically alters the nucleic acid-binding properties of RNA polymerases by stabilizing the initiation complex and destabilizing elongation complexes. Seems to translocate with the RNA polymerase following initiation and acts by binding to the non template strand of the transcription bubble in elongation complexes. The protein is Transcription factor E of Aeropyrum pernix (strain ATCC 700893 / DSM 11879 / JCM 9820 / NBRC 100138 / K1).